The chain runs to 363 residues: Carbamoyl phosphate synthase small chain (363 aa).

The segment at 1–172 (MKAFLVLDNG…TKYIFGTHTG (172 aa)) is CPSase. 3 residues coordinate L-glutamine: Ser45, Gly224, and Gly226. The 187-residue stretch at 176–362 (KLAVYDYGVK…YDLVETTKRG (187 aa)) folds into the Glutamine amidotransferase type-1 domain. Catalysis depends on Cys252, which acts as the Nucleophile. Positions 253, 256, 294, 296, and 297 each coordinate L-glutamine. Active-site residues include His335 and Glu337.

It belongs to the CarA family. In terms of assembly, composed of two chains; the small (or glutamine) chain promotes the hydrolysis of glutamine to ammonia, which is used by the large (or ammonia) chain to synthesize carbamoyl phosphate. Tetramer of heterodimers (alpha,beta)4.

The enzyme catalyses hydrogencarbonate + L-glutamine + 2 ATP + H2O = carbamoyl phosphate + L-glutamate + 2 ADP + phosphate + 2 H(+). It catalyses the reaction L-glutamine + H2O = L-glutamate + NH4(+). It functions in the pathway amino-acid biosynthesis; L-arginine biosynthesis; carbamoyl phosphate from bicarbonate: step 1/1. Its pathway is pyrimidine metabolism; UMP biosynthesis via de novo pathway; (S)-dihydroorotate from bicarbonate: step 1/3. Functionally, small subunit of the glutamine-dependent carbamoyl phosphate synthetase (CPSase). CPSase catalyzes the formation of carbamoyl phosphate from the ammonia moiety of glutamine, carbonate, and phosphate donated by ATP, constituting the first step of 2 biosynthetic pathways, one leading to arginine and/or urea and the other to pyrimidine nucleotides. The small subunit (glutamine amidotransferase) binds and cleaves glutamine to supply the large subunit with the substrate ammonia. The polypeptide is Carbamoyl phosphate synthase small chain (Leptospira borgpetersenii serovar Hardjo-bovis (strain L550)).